A 63-amino-acid chain; its full sequence is Large ribosomal subunit protein uL29 (63 aa).

This sequence belongs to the universal ribosomal protein uL29 family.

In Shigella dysenteriae serotype 1 (strain Sd197), this protein is Large ribosomal subunit protein uL29.